The primary structure comprises 426 residues: Serine--tRNA ligase (426 aa).

T233–E235 lines the L-serine pocket. ATP is bound at residue R264–E266. E287 is an L-serine binding site. E351–S354 lines the ATP pocket. An L-serine-binding site is contributed by S387.

It belongs to the class-II aminoacyl-tRNA synthetase family. Type-1 seryl-tRNA synthetase subfamily. Homodimer. The tRNA molecule binds across the dimer.

It localises to the cytoplasm. The enzyme catalyses tRNA(Ser) + L-serine + ATP = L-seryl-tRNA(Ser) + AMP + diphosphate + H(+). It catalyses the reaction tRNA(Sec) + L-serine + ATP = L-seryl-tRNA(Sec) + AMP + diphosphate + H(+). It participates in aminoacyl-tRNA biosynthesis; selenocysteinyl-tRNA(Sec) biosynthesis; L-seryl-tRNA(Sec) from L-serine and tRNA(Sec): step 1/1. Catalyzes the attachment of serine to tRNA(Ser). Is also able to aminoacylate tRNA(Sec) with serine, to form the misacylated tRNA L-seryl-tRNA(Sec), which will be further converted into selenocysteinyl-tRNA(Sec). The polypeptide is Serine--tRNA ligase (Pseudomonas putida (strain W619)).